Consider the following 304-residue polypeptide: Voltage-dependent anion channel-forming protein YneE (304 aa).

The next 4 helical transmembrane spans lie at 28-48, 50-70, 194-214, and 220-240; these read LLLN…YTHL, IKFT…FLGF, VLAG…TLIL, and LFCI…TPFI.

The protein belongs to the anion channel-forming bestrophin (TC 1.A.46) family.

It localises to the cell membrane. The polypeptide is Voltage-dependent anion channel-forming protein YneE (yneE) (Escherichia coli O157:H7).